Consider the following 262-residue polypeptide: MDPLALLRKAGLEAEGPALPLHGGDISRVWRVGRFVVKTAQDPPPGLFRAEARGLQALAERGVRVPRVHWVGEEGLVLAYLEPGPEDWEGLARTLAALHRRREGSYLAEPGFLGTFPLPGREGGEWTAFFYERCVLPLLEATWDRLQGLGPKVEALYQRPLPAEGPAPLHGDLWHGNVYFAREGPALLDPSFFVGERGVDLAMMRLFGGFPRRFWEVYGELYPVPEEVERALPRYQVYYLLAHVHFFGQGYLGALWRAISAS.

An ATP-binding site is contributed by 79 to 81 (AYL). Aspartate 172 (proton acceptor) is an active-site residue.

This sequence belongs to the fructosamine kinase family.

The catalysed reaction is N(6)-(D-ribulosyl)-L-lysine + ATP = N(6)-(3-O-phospho-D-ribulosyl)-L-lysine + ADP + H(+). It catalyses the reaction N(6)-(D-erythrulosyl)-L-lysine + ATP = N(6)-(3-O-phospho-D-erythrulosyl)-L-lysine + ADP + H(+). The enzyme catalyses N(6)-D-ribulosyl-L-lysyl-[protein] + ATP = N(6)-(3-O-phospho-D-ribulosyl)-L-lysyl-[protein] + ADP + H(+). It carries out the reaction N(6)-(D-erythrulosyl)-L-lysyl-[protein] + ATP = N(6)-(3-O-phospho-D-erythrulosyl)-L-lysyl-[protein] + ADP + H(+). Ketoamine kinase that phosphorylates ketoamines, such as erythruloselysine and ribuloselysine, on the third carbon of the sugar moiety to generate ketoamine 3-phosphate. Has higher activity on free lysine (erythruloselysine and ribuloselysine), than on ribuloselysine and erythruloselysine residues on glycated proteins. The polypeptide is Probable ketoamine kinase TTHA1179 (Thermus thermophilus (strain ATCC 27634 / DSM 579 / HB8)).